The chain runs to 82 residues: Sulfur carrier protein TusA (82 aa).

Cys19 (cysteine persulfide intermediate) is an active-site residue.

Belongs to the sulfur carrier protein TusA family.

It is found in the cytoplasm. Sulfur carrier protein which probably makes part of a sulfur-relay system. The chain is Sulfur carrier protein TusA from Vibrio parahaemolyticus serotype O3:K6 (strain RIMD 2210633).